The following is a 729-amino-acid chain: Catalase-peroxidase 1 (729 aa).

The tryptophyl-tyrosyl-methioninium (Trp-Tyr) (with M-252) cross-link spans 98-226; that stretch reads WHSAGSYRIA…LAAVMMGLIY (129 aa). The active-site Proton acceptor is the histidine 99. Residues 226 to 252 constitute a cross-link (tryptophyl-tyrosyl-methioninium (Tyr-Met) (with W-98)); that stretch reads YVNPEGVDGNPDPLRTAKDIRETFARM. Histidine 267 contributes to the heme b binding site.

It belongs to the peroxidase family. Peroxidase/catalase subfamily. As to quaternary structure, homodimer or homotetramer. The cofactor is heme b. In terms of processing, formation of the three residue Trp-Tyr-Met cross-link is important for the catalase, but not the peroxidase activity of the enzyme.

The enzyme catalyses H2O2 + AH2 = A + 2 H2O. It carries out the reaction 2 H2O2 = O2 + 2 H2O. Its function is as follows. Bifunctional enzyme with both catalase and broad-spectrum peroxidase activity. The chain is Catalase-peroxidase 1 from Cellvibrio japonicus (strain Ueda107) (Pseudomonas fluorescens subsp. cellulosa).